Reading from the N-terminus, the 258-residue chain is Snake venom serine protease HS114 (258 aa).

The first 18 residues, 1-18, serve as a signal peptide directing secretion; sequence MVLVRVVANLLILQLSYA. A propeptide spanning residues 19-24 is cleaved from the precursor; that stretch reads QKVSEL. One can recognise a Peptidase S1 domain in the interval 25–249; the sequence is VVGGDECNIN…YNTWIESVIA (225 aa). Intrachain disulfides connect cysteine 31–cysteine 163, cysteine 50–cysteine 66, cysteine 98–cysteine 256, cysteine 142–cysteine 210, cysteine 174–cysteine 189, and cysteine 200–cysteine 225. An N-linked (GlcNAc...) asparagine glycan is attached at asparagine 44. Active-site charge relay system residues include histidine 65 and aspartate 110. Serine 204 functions as the Charge relay system in the catalytic mechanism.

Belongs to the peptidase S1 family. Snake venom subfamily. In terms of assembly, monomer. N-glycosylated. Contains approximately 10% carbohydrates. In terms of tissue distribution, expressed by the venom gland.

The protein localises to the secreted. Inhibited by benzamidine, PMSF, leupeptin, SDS and DTT, but not by EDTA, and commercial antivenom. Snake venom serine protease that shows non-specific action on fibrinogen. It preferentially degrades fibrinogen Aalpha (FGA), releasing fibrinopeptide A, and shows a lower activity on fibrinogen Bbeta (FGB), releasing fibrinopeptide B and other uncommon fibrinopeptides. Also shows low fibrinolytic activity compared to plasmin. Has high enzymatic activity on the substrates for activated protein C and factor XIa, and for thrombin. Shows a wide activity spectrum at different peptide sequences, with a preferential cleavage at Lys-|-Xaa over Arg-|-Xaa bonds. The polypeptide is Snake venom serine protease HS114 (Bothrops jararaca (Jararaca)).